Consider the following 38-residue polypeptide: 4 kDa defensin (38 aa).

Cystine bridges form between cysteine 4-cysteine 25, cysteine 11-cysteine 33, and cysteine 15-cysteine 35.

The protein belongs to the invertebrate defensin family. Type 2 subfamily.

It is found in the secreted. In terms of biological role, dual-function peptide with antimicrobial and potassium channel-blocking activities. Shows inhibitory activity against Gram-positive bacteria such as M.luteus, S.aureus, B.subtilis, and M.luteus as well as methicillin-resistant S.aureus (MIC=0.1-20 uM). Does not act on bacteria by disrupting membranes. Also moderately inhibits Kv1.1/KCNA1, Kv1.2/KCNA2, and Kv1.3/KCNA3 potassium channels. Inhibits potassium channels by interacting with the pore region. Does not show hemolytic activity. The polypeptide is 4 kDa defensin (Leiurus hebraeus (Hebrew deathstalker scorpion)).